A 494-amino-acid polypeptide reads, in one-letter code: Lysine--tRNA ligase (494 aa).

The Mg(2+) site is built by E407 and E414.

This sequence belongs to the class-II aminoacyl-tRNA synthetase family. In terms of assembly, homodimer. It depends on Mg(2+) as a cofactor.

It localises to the cytoplasm. The enzyme catalyses tRNA(Lys) + L-lysine + ATP = L-lysyl-tRNA(Lys) + AMP + diphosphate. The chain is Lysine--tRNA ligase from Lactococcus lactis subsp. lactis (strain IL1403) (Streptococcus lactis).